Here is a 35-residue protein sequence, read N- to C-terminus: DDCLGMFSSCDPNNDKCCPNRVCRVRDQWCKYKLW.

3 disulfides stabilise this stretch: Cys-3–Cys-18, Cys-10–Cys-23, and Cys-17–Cys-30.

It belongs to the neurotoxin 10 (Hwtx-1) family. 59 (Tltx) subfamily. In terms of assembly, monomer. As to expression, expressed by the venom gland.

The protein localises to the secreted. Blocks Kv4.2/KCND2 voltage-gated potassium channels probably by shifting the voltage-dependence of channel activation to more depolarized potentials and by binding to the S3-S4 linker region of the voltage sensor domain. The protein is Kappa-theraphotoxin-Tb1c of Theraphosa blondi (Goliath birdeating spider).